The sequence spans 212 residues: Methylthioribulose-1-phosphate dehydratase (212 aa).

Zn(2+) is bound by residues histidine 97 and histidine 99.

It belongs to the aldolase class II family. MtnB subfamily. As to quaternary structure, homotetramer. Zn(2+) serves as cofactor.

It catalyses the reaction 5-(methylsulfanyl)-D-ribulose 1-phosphate = 5-methylsulfanyl-2,3-dioxopentyl phosphate + H2O. It participates in amino-acid biosynthesis; L-methionine biosynthesis via salvage pathway; L-methionine from S-methyl-5-thio-alpha-D-ribose 1-phosphate: step 2/6. Functionally, catalyzes the dehydration of methylthioribulose-1-phosphate (MTRu-1-P) into 2,3-diketo-5-methylthiopentyl-1-phosphate (DK-MTP-1-P). This chain is Methylthioribulose-1-phosphate dehydratase, found in Bacillus mycoides (strain KBAB4) (Bacillus weihenstephanensis).